The sequence spans 247 residues: Cell division protein ZapD (247 aa).

Belongs to the ZapD family. In terms of assembly, interacts with FtsZ.

It localises to the cytoplasm. In terms of biological role, cell division factor that enhances FtsZ-ring assembly. Directly interacts with FtsZ and promotes bundling of FtsZ protofilaments, with a reduction in FtsZ GTPase activity. The protein is Cell division protein ZapD of Salmonella dublin (strain CT_02021853).